Consider the following 213-residue polypeptide: Imidazole glycerol phosphate synthase subunit HisH 1 (213 aa).

The 211-residue stretch at 3–213 folds into the Glutamine amidotransferase type-1 domain; the sequence is SVSIVDYGVG…LSIIQQFLQI (211 aa). Residue Cys81 is the Nucleophile of the active site. Active-site residues include His195 and Glu197.

As to quaternary structure, heterodimer of HisH and HisF.

It is found in the cytoplasm. It carries out the reaction 5-[(5-phospho-1-deoxy-D-ribulos-1-ylimino)methylamino]-1-(5-phospho-beta-D-ribosyl)imidazole-4-carboxamide + L-glutamine = D-erythro-1-(imidazol-4-yl)glycerol 3-phosphate + 5-amino-1-(5-phospho-beta-D-ribosyl)imidazole-4-carboxamide + L-glutamate + H(+). The enzyme catalyses L-glutamine + H2O = L-glutamate + NH4(+). The protein operates within amino-acid biosynthesis; L-histidine biosynthesis; L-histidine from 5-phospho-alpha-D-ribose 1-diphosphate: step 5/9. IGPS catalyzes the conversion of PRFAR and glutamine to IGP, AICAR and glutamate. The HisH subunit provides the glutamine amidotransferase activity that produces the ammonia necessary to HisF for the synthesis of IGP and AICAR. In Legionella pneumophila (strain Paris), this protein is Imidazole glycerol phosphate synthase subunit HisH 1.